We begin with the raw amino-acid sequence, 238 residues long: Ribonuclease PH (238 aa).

Residues Arg86 and Gly124–Arg126 each bind phosphate.

The protein belongs to the RNase PH family. As to quaternary structure, homohexameric ring arranged as a trimer of dimers.

The catalysed reaction is tRNA(n+1) + phosphate = tRNA(n) + a ribonucleoside 5'-diphosphate. Phosphorolytic 3'-5' exoribonuclease that plays an important role in tRNA 3'-end maturation. Removes nucleotide residues following the 3'-CCA terminus of tRNAs; can also add nucleotides to the ends of RNA molecules by using nucleoside diphosphates as substrates, but this may not be physiologically important. Probably plays a role in initiation of 16S rRNA degradation (leading to ribosome degradation) during starvation. The sequence is that of Ribonuclease PH from Rhizorhabdus wittichii (strain DSM 6014 / CCUG 31198 / JCM 15750 / NBRC 105917 / EY 4224 / RW1) (Sphingomonas wittichii).